A 512-amino-acid chain; its full sequence is Activin receptor type-2B (512 aa).

The N-terminal stretch at 1–18 is a signal peptide; that stretch reads MTAPWVALALLWGSLCAG. Over 19–137 the chain is Extracellular; sequence SGRGEAETRE…PPPTAPTLLT (119 aa). Cystine bridges form between Cys-29/Cys-59, Cys-49/Cys-77, Cys-84/Cys-103, Cys-90/Cys-102, and Cys-104/Cys-109. N-linked (GlcNAc...) asparagine glycans are attached at residues Asn-42 and Asn-65. Residues 138–158 form a helical membrane-spanning segment; that stretch reads VLAYSLLPIGGLSLIVLLAFW. At 159–512 the chain is on the cytoplasmic side; it reads MYRHRKPPYG…VDLPPKESSI (354 aa). The 291-residue stretch at 190–480 folds into the Protein kinase domain; sequence LQLLEIKARG…AGCVEERVSL (291 aa). Residues 196–204 and Lys-217 each bind ATP; that span reads KARGRFGCV. Residue Asp-321 is the Proton acceptor of the active site. The interval 491 to 512 is interaction with DYNLT1; that stretch reads DCLVSLVTSVTNVDLPPKESSI.

It belongs to the protein kinase superfamily. TKL Ser/Thr protein kinase family. TGFB receptor subfamily. In terms of assembly, forms an activin receptor complex with activin type II receptors such as ACVR1B. Interacts with VPS39. Interacts with DYNLT1. Interacts with BMP3. Interacts with BMP2. Interacts with BMP6. It depends on Mg(2+) as a cofactor. Mn(2+) serves as cofactor. In terms of processing, phosphorylated. Constitutive phosphorylation is in part catalyzed by its own kinase activity.

It localises to the cell membrane. It catalyses the reaction L-threonyl-[receptor-protein] + ATP = O-phospho-L-threonyl-[receptor-protein] + ADP + H(+). The catalysed reaction is L-seryl-[receptor-protein] + ATP = O-phospho-L-seryl-[receptor-protein] + ADP + H(+). Transmembrane serine/threonine kinase activin type-2 receptor forming an activin receptor complex with activin type-1 serine/threonine kinase receptors (ACVR1, ACVR1B or ACVR1c). Transduces the activin signal from the cell surface to the cytoplasm and is thus regulating many physiological and pathological processes including neuronal differentiation and neuronal survival, hair follicle development and cycling, FSH production by the pituitary gland, wound healing, extracellular matrix production, immunosuppression and carcinogenesis. Activin is also thought to have a paracrine or autocrine role in follicular development in the ovary. Within the receptor complex, the type-2 receptors act as a primary activin receptors (binds activin-A/INHBA, activin-B/INHBB as well as inhibin-A/INHA-INHBA). The type-1 receptors like ACVR1B act as downstream transducers of activin signals. Activin binds to type-2 receptor at the plasma membrane and activates its serine-threonine kinase. The activated receptor type-2 then phosphorylates and activates the type-1 receptor. Once activated, the type-1 receptor binds and phosphorylates the SMAD proteins SMAD2 and SMAD3, on serine residues of the C-terminal tail. Soon after their association with the activin receptor and subsequent phosphorylation, SMAD2 and SMAD3 are released into the cytoplasm where they interact with the common partner SMAD4. This SMAD complex translocates into the nucleus where it mediates activin-induced transcription. Inhibitory SMAD7, which is recruited to ACVR1B through FKBP1A, can prevent the association of SMAD2 and SMAD3 with the activin receptor complex, thereby blocking the activin signal. Activin signal transduction is also antagonized by the binding to the receptor of inhibin-B via the IGSF1 inhibin coreceptor. The chain is Activin receptor type-2B (ACVR2B) from Homo sapiens (Human).